We begin with the raw amino-acid sequence, 260 residues long: NH(3)-dependent NAD(+) synthetase (260 aa).

31 to 38 (GLSGGLDS) contacts ATP. Aspartate 37 lines the Mg(2+) pocket. Arginine 112 contributes to the deamido-NAD(+) binding site. ATP is bound at residue threonine 132. Glutamate 137 contacts Mg(2+). Positions 161 and 183 each coordinate ATP.

This sequence belongs to the NAD synthetase family. In terms of assembly, homodimer.

The catalysed reaction is deamido-NAD(+) + NH4(+) + ATP = AMP + diphosphate + NAD(+) + H(+). Its pathway is cofactor biosynthesis; NAD(+) biosynthesis; NAD(+) from deamido-NAD(+) (ammonia route): step 1/1. In terms of biological role, catalyzes the ATP-dependent amidation of deamido-NAD to form NAD. Uses ammonia as a nitrogen source. This chain is NH(3)-dependent NAD(+) synthetase, found in Helicobacter pylori (strain ATCC 700392 / 26695) (Campylobacter pylori).